Consider the following 304-residue polypeptide: Aspartate carbamoyltransferase catalytic subunit (304 aa).

Residues R54 and T55 each contribute to the carbamoyl phosphate site. K83 contacts L-aspartate. Carbamoyl phosphate is bound by residues R104, H132, and Q135. L-aspartate-binding residues include R165 and R226. The carbamoyl phosphate site is built by L265 and P266.

The protein belongs to the aspartate/ornithine carbamoyltransferase superfamily. ATCase family. As to quaternary structure, heterooligomer of catalytic and regulatory chains.

The enzyme catalyses carbamoyl phosphate + L-aspartate = N-carbamoyl-L-aspartate + phosphate + H(+). Its pathway is pyrimidine metabolism; UMP biosynthesis via de novo pathway; (S)-dihydroorotate from bicarbonate: step 2/3. In terms of biological role, catalyzes the condensation of carbamoyl phosphate and aspartate to form carbamoyl aspartate and inorganic phosphate, the committed step in the de novo pyrimidine nucleotide biosynthesis pathway. This chain is Aspartate carbamoyltransferase catalytic subunit, found in Pyrobaculum neutrophilum (strain DSM 2338 / JCM 9278 / NBRC 100436 / V24Sta) (Thermoproteus neutrophilus).